The chain runs to 464 residues: UDP-N-acetylmuramoylalanine--D-glutamate ligase (464 aa).

Residue 127–133 participates in ATP binding; it reads GSNGKST.

This sequence belongs to the MurCDEF family.

The protein resides in the cytoplasm. It carries out the reaction UDP-N-acetyl-alpha-D-muramoyl-L-alanine + D-glutamate + ATP = UDP-N-acetyl-alpha-D-muramoyl-L-alanyl-D-glutamate + ADP + phosphate + H(+). Its pathway is cell wall biogenesis; peptidoglycan biosynthesis. In terms of biological role, cell wall formation. Catalyzes the addition of glutamate to the nucleotide precursor UDP-N-acetylmuramoyl-L-alanine (UMA). The chain is UDP-N-acetylmuramoylalanine--D-glutamate ligase from Dinoroseobacter shibae (strain DSM 16493 / NCIMB 14021 / DFL 12).